The sequence spans 334 residues: Beta-hexosaminidase (334 aa).

Substrate-binding positions include D62, R70, R130, and 160-161 (KH). H173 functions as the Proton donor/acceptor in the catalytic mechanism. D243 acts as the Nucleophile in catalysis.

It belongs to the glycosyl hydrolase 3 family. NagZ subfamily.

It localises to the cytoplasm. It catalyses the reaction Hydrolysis of terminal non-reducing N-acetyl-D-hexosamine residues in N-acetyl-beta-D-hexosaminides.. The protein operates within cell wall biogenesis; peptidoglycan recycling. In terms of biological role, plays a role in peptidoglycan recycling by cleaving the terminal beta-1,4-linked N-acetylglucosamine (GlcNAc) from peptide-linked peptidoglycan fragments, giving rise to free GlcNAc, anhydro-N-acetylmuramic acid and anhydro-N-acetylmuramic acid-linked peptides. The protein is Beta-hexosaminidase of Photobacterium profundum (strain SS9).